The chain runs to 79 residues: Cell division protein ZapB (79 aa).

Positions 1-78 (MSLEALDQLQ…LNSLLGKMDD (78 aa)) form a coiled coil.

It belongs to the ZapB family. As to quaternary structure, homodimer. The ends of the coiled-coil dimer bind to each other, forming polymers. Interacts with FtsZ.

The protein resides in the cytoplasm. Functionally, non-essential, abundant cell division factor that is required for proper Z-ring formation. It is recruited early to the divisome by direct interaction with FtsZ, stimulating Z-ring assembly and thereby promoting cell division earlier in the cell cycle. Its recruitment to the Z-ring requires functional FtsA or ZipA. The sequence is that of Cell division protein ZapB from Hamiltonella defensa subsp. Acyrthosiphon pisum (strain 5AT).